Reading from the N-terminus, the 920-residue chain is Phosphoenolpyruvate carboxylase (920 aa).

Catalysis depends on residues histidine 138 and lysine 583.

It belongs to the PEPCase type 1 family. Requires Mg(2+) as cofactor.

It carries out the reaction oxaloacetate + phosphate = phosphoenolpyruvate + hydrogencarbonate. Its function is as follows. Forms oxaloacetate, a four-carbon dicarboxylic acid source for the tricarboxylic acid cycle. The polypeptide is Phosphoenolpyruvate carboxylase (Streptococcus pyogenes serotype M5 (strain Manfredo)).